A 105-amino-acid polypeptide reads, in one-letter code: MSIIKLEKGDNNNAAVLEKKTAALKNKSPKYKVLLHNDPVNSMEYITIALREVVPQLSEQDAIAIMLEAHNNGVGLVIVCDLEPAEFYSESLKSKGISSSIEKDE.

It belongs to the ClpS family. In terms of assembly, binds to the N-terminal domain of the chaperone ClpA.

In terms of biological role, involved in the modulation of the specificity of the ClpAP-mediated ATP-dependent protein degradation. The chain is ATP-dependent Clp protease adapter protein ClpS from Prochlorococcus marinus (strain MIT 9515).